A 371-amino-acid chain; its full sequence is Aspartate-semialdehyde dehydrogenase (371 aa).

Residues 10 to 13, 37 to 38, and Q74 each bind NADP(+); these read RGMV and TS. R103 is a phosphate binding site. The Acyl-thioester intermediate role is filled by C136. Residue Q163 participates in substrate binding. Residue S166 coordinates NADP(+). E243 provides a ligand contact to substrate. Position 246 (K246) interacts with phosphate. A substrate-binding site is contributed by R270. Catalysis depends on H277, which acts as the Proton acceptor. Residue Q353 coordinates NADP(+).

The protein belongs to the aspartate-semialdehyde dehydrogenase family. Homodimer.

It catalyses the reaction L-aspartate 4-semialdehyde + phosphate + NADP(+) = 4-phospho-L-aspartate + NADPH + H(+). It functions in the pathway amino-acid biosynthesis; L-lysine biosynthesis via DAP pathway; (S)-tetrahydrodipicolinate from L-aspartate: step 2/4. It participates in amino-acid biosynthesis; L-methionine biosynthesis via de novo pathway; L-homoserine from L-aspartate: step 2/3. Its pathway is amino-acid biosynthesis; L-threonine biosynthesis; L-threonine from L-aspartate: step 2/5. In terms of biological role, catalyzes the NADPH-dependent formation of L-aspartate-semialdehyde (L-ASA) by the reductive dephosphorylation of L-aspartyl-4-phosphate. The protein is Aspartate-semialdehyde dehydrogenase of Haemophilus influenzae (strain ATCC 51907 / DSM 11121 / KW20 / Rd).